The sequence spans 210 residues: N-(5'-phosphoribosyl)anthranilate isomerase (210 aa).

This sequence belongs to the TrpF family.

The enzyme catalyses N-(5-phospho-beta-D-ribosyl)anthranilate = 1-(2-carboxyphenylamino)-1-deoxy-D-ribulose 5-phosphate. The protein operates within amino-acid biosynthesis; L-tryptophan biosynthesis; L-tryptophan from chorismate: step 3/5. This chain is N-(5'-phosphoribosyl)anthranilate isomerase, found in Staphylococcus aureus (strain bovine RF122 / ET3-1).